The sequence spans 247 residues: MAGHSKWANIKHRKAAQDAKRGKIFTKLIRELTVAAKMGGGEPNDNPRLRAAIDKALGQNMTRDTIDRAVKRGAGGDDDGSMDEITYEGYGKGGVAVLVETMTDNVNRTVAEVRHAFSKFGGNLGTSGSVAFLFTKRGEIFFEPGVDEEKLMEVALEAGAEDVEEMGDDGFLVITTPDKSFGEVVDSLRAAGLEFAEAEVTMHPSTEAEMDTDTAETVQKMIDMLEDLDDVQNVYTNASWPAPQEEE.

The protein belongs to the TACO1 family.

The protein localises to the cytoplasm. The protein is Probable transcriptional regulatory protein ABO_0750 of Alcanivorax borkumensis (strain ATCC 700651 / DSM 11573 / NCIMB 13689 / SK2).